The following is a 211-amino-acid chain: Uridine kinase (211 aa).

Residue 12–19 (GGSGSGKT) coordinates ATP.

This sequence belongs to the uridine kinase family.

The protein resides in the cytoplasm. The catalysed reaction is uridine + ATP = UMP + ADP + H(+). The enzyme catalyses cytidine + ATP = CMP + ADP + H(+). Its pathway is pyrimidine metabolism; CTP biosynthesis via salvage pathway; CTP from cytidine: step 1/3. It participates in pyrimidine metabolism; UMP biosynthesis via salvage pathway; UMP from uridine: step 1/1. The sequence is that of Uridine kinase from Anoxybacillus flavithermus (strain DSM 21510 / WK1).